The primary structure comprises 207 residues: ATP-dependent Clp protease proteolytic subunit (207 aa).

Catalysis depends on serine 111, which acts as the Nucleophile. Residue histidine 136 is part of the active site.

The protein belongs to the peptidase S14 family. As to quaternary structure, fourteen ClpP subunits assemble into 2 heptameric rings which stack back to back to give a disk-like structure with a central cavity, resembling the structure of eukaryotic proteasomes.

It is found in the cytoplasm. It carries out the reaction Hydrolysis of proteins to small peptides in the presence of ATP and magnesium. alpha-casein is the usual test substrate. In the absence of ATP, only oligopeptides shorter than five residues are hydrolyzed (such as succinyl-Leu-Tyr-|-NHMec, and Leu-Tyr-Leu-|-Tyr-Trp, in which cleavage of the -Tyr-|-Leu- and -Tyr-|-Trp bonds also occurs).. Its function is as follows. Cleaves peptides in various proteins in a process that requires ATP hydrolysis. Has a chymotrypsin-like activity. Plays a major role in the degradation of misfolded proteins. In Proteus mirabilis (strain HI4320), this protein is ATP-dependent Clp protease proteolytic subunit.